A 522-amino-acid polypeptide reads, in one-letter code: Glutamate--cysteine ligase (522 aa).

The protein belongs to the glutamate--cysteine ligase type 1 family. Type 1 subfamily.

The catalysed reaction is L-cysteine + L-glutamate + ATP = gamma-L-glutamyl-L-cysteine + ADP + phosphate + H(+). Its pathway is sulfur metabolism; glutathione biosynthesis; glutathione from L-cysteine and L-glutamate: step 1/2. The sequence is that of Glutamate--cysteine ligase from Vibrio campbellii (strain ATCC BAA-1116).